We begin with the raw amino-acid sequence, 467 residues long: Pancreatic lipase-related protein 3 (467 aa).

An N-terminal signal peptide occupies residues 1–17 (MLGIWIVAFLFFGTSRG). Cysteines 21 and 27 form a disulfide. Asn-74 carries N-linked (GlcNAc...) asparagine glycosylation. The cysteines at positions 107 and 118 are disulfide-linked. Asn-125 is a glycosylation site (N-linked (GlcNAc...) asparagine). Residue Ser-168 is the Nucleophile of the active site. Asp-191 functions as the Charge relay system in the catalytic mechanism. Cys-252 and Cys-277 are disulfide-bonded. His-279 (charge relay system) is an active-site residue. 3 disulfides stabilise this stretch: Cys-301–Cys-312, Cys-315–Cys-320, and Cys-451–Cys-467. Residues 355–467 (WRHKLSVKLS…PNILQNLKPC (113 aa)) enclose the PLAT domain.

This sequence belongs to the AB hydrolase superfamily. Lipase family. As to expression, overexpressed in hepatocellular carcinoma.

It localises to the secreted. It carries out the reaction a triacylglycerol + H2O = a diacylglycerol + a fatty acid + H(+). The protein is Pancreatic lipase-related protein 3 (PNLIPRP3) of Homo sapiens (Human).